A 453-amino-acid chain; its full sequence is Homogentisate 1,2-dioxygenase (453 aa).

H306 (proton acceptor) is an active-site residue. Residues H349 and E355 each contribute to the Fe cation site. Homogentisate-binding residues include Y364 and H385. H385 provides a ligand contact to Fe cation.

It belongs to the homogentisate dioxygenase family. Hexamer; dimer of trimers. Fe cation is required as a cofactor.

It catalyses the reaction homogentisate + O2 = 4-maleylacetoacetate + H(+). It participates in amino-acid degradation; L-phenylalanine degradation; acetoacetate and fumarate from L-phenylalanine: step 4/6. Functionally, involved in the catabolism of homogentisate (2,5-dihydroxyphenylacetate or 2,5-OH-PhAc), a central intermediate in the degradation of phenylalanine and tyrosine. Catalyzes the oxidative ring cleavage of the aromatic ring of homogentisate to yield maleylacetoacetate. The protein is Homogentisate 1,2-dioxygenase of Rhizobium etli (strain CIAT 652).